We begin with the raw amino-acid sequence, 415 residues long: Fructose-like permease IIC component (415 aa).

The Cytoplasmic segment spans residues 1–46; sequence MAIKKRSATVVPGASGAAAAVKNPQASKSSFWGELPQHVMSGISRM. The PTS EIIC type-2 domain maps to 35-410; it reads LPQHVMSGIS…RLMMFRKGKL (376 aa). The chain crosses the membrane as a helical span at residues 47 to 67; the sequence is VPTLIMGGVILAFSQLIAYSW. Residues 68 to 101 lie on the Periplasmic side of the membrane; it reads LKIPAEIGIMDALNSGKFSGFDLSLLKFAWLSQS. A helical transmembrane segment spans residues 102–122; sequence FGGVLFGFAIPMFAAFVANSI. Residues 123-126 lie on the Cytoplasmic side of the membrane; it reads GGKL. A helical transmembrane segment spans residues 127–147; that stretch reads AFPAGFIGGLMSTQPTQLLNF. Over 148-157 the chain is Periplasmic; it reads DPSTMQWATS. The chain crosses the membrane as a helical span at residues 158–178; the sequence is SPVPSTFIGALIISIVAGYLV. Residues 179–197 are Cytoplasmic-facing; it reads KWMNQKIQLPDFLLAFKTT. Residues 198–218 traverse the membrane as a helical segment; the sequence is FLLPILSAIFVMLAMYYVITP. At 219-237 the chain is on the periplasmic side; sequence FGGWINGGIRTVLTAAGEK. Residues 238–258 form a helical membrane-spanning segment; it reads GALMYAMGIAAATAIDLGGPI. The Cytoplasmic segment spans residues 259 to 276; the sequence is NKAAGFVAFSFTTDHVLP. Residues 277-297 form a helical membrane-spanning segment; that stretch reads VTARSIAIVIPPIGLGLATII. At 298-318 the chain is on the periplasmic side; sequence DRRLTGKRLFNAQLYPQGKTA. Residues 319-339 form a helical membrane-spanning segment; sequence MFLAFMGISEGAIPFALESPI. The Cytoplasmic segment spans residues 340–341; that stretch reads TA. The helical transmembrane segment at 342 to 362 threads the bilayer; the sequence is IPSYMVGAIVGSTAAVWLGAV. Residues 363 to 378 are Periplasmic-facing; the sequence is QWFPESAIWAWPLVTN. A helical transmembrane segment spans residues 379-399; that stretch reads LGVYMAGIALGAVITALMVVF. Topologically, residues 400–415 are cytoplasmic; the sequence is LRLMMFRKGKLLIDSL.

The protein localises to the cell inner membrane. The phosphoenolpyruvate-dependent sugar phosphotransferase system (PTS), a major carbohydrate active -transport system, catalyzes the phosphorylation of incoming sugar substrates concomitant with their translocation across the cell membrane. This is Fructose-like permease IIC component (fryC) from Escherichia coli O157:H7.